We begin with the raw amino-acid sequence, 354 residues long: Ornithine transcarbamylase, mitochondrial (354 aa).

Residues 1–32 (MLSNLRILLNNAALRKGHTSVVRHFWCGKPVQ) constitute a mitochondrion transit peptide. N6-acetyllysine; alternate is present on Lys-70. Position 70 is an N6-succinyllysine; alternate (Lys-70). N6-succinyllysine is present on Lys-80. Residue Lys-88 is modified to N6-acetyllysine; alternate. Position 88 is an N6-succinyllysine; alternate (Lys-88). 90 to 94 (STRTR) lines the carbamoyl phosphate pocket. The residue at position 133 (Ser-133) is a Phosphoserine. Arg-141 contributes to the carbamoyl phosphate binding site. Residue Arg-141 participates in L-ornithine binding. Lys-144 is modified (N6-acetyllysine; alternate). Lys-144 carries the post-translational modification N6-succinyllysine; alternate. Residue His-168 participates in carbamoyl phosphate binding. Residue Asn-199 participates in L-ornithine binding. Residues Lys-221, Lys-231, and Lys-238 each carry the N6-acetyllysine; alternate modification. N6-succinyllysine; alternate occurs at positions 221, 231, and 238. Lys-243 is modified (N6-acetyllysine). An L-ornithine-binding site is contributed by 263–267 (DTWIS). Residues Lys-274 and Lys-289 each carry the N6-succinyllysine modification. Lys-292 carries the post-translational modification N6-acetyllysine; alternate. Lys-292 is subject to N6-succinyllysine; alternate. 302–305 (HCLP) is an L-ornithine binding site. Cys-303 is an active-site residue. Lys-307 carries the N6-acetyllysine; alternate modification. Position 307 is an N6-succinyllysine; alternate (Lys-307). Arg-330 contributes to the carbamoyl phosphate binding site. Residue Arg-330 coordinates L-ornithine.

Belongs to the aspartate/ornithine carbamoyltransferase superfamily. OTCase family. Homotrimer. In terms of processing, acetylation at Lys-88 negatively regulates ornithine carbamoyltransferase activity in response to nutrient signals.

Its subcellular location is the mitochondrion matrix. The catalysed reaction is carbamoyl phosphate + L-ornithine = L-citrulline + phosphate + H(+). The protein operates within nitrogen metabolism; urea cycle; L-citrulline from L-ornithine and carbamoyl phosphate: step 1/1. With respect to regulation, negatively regulated by lysine acetylation. Catalyzes the second step of the urea cycle, the condensation of carbamoyl phosphate with L-ornithine to form L-citrulline. The urea cycle ensures the detoxification of ammonia by converting it to urea for excretion. This chain is Ornithine transcarbamylase, mitochondrial, found in Mus musculus (Mouse).